Reading from the N-terminus, the 192-residue chain is UPF0312 protein ECA1782 (192 aa).

An N-terminal signal peptide occupies residues 1–23 (MLKKTLLSLTAVSMLASAGSALA).

It belongs to the UPF0312 family. Type 1 subfamily.

The protein localises to the periplasm. This is UPF0312 protein ECA1782 from Pectobacterium atrosepticum (strain SCRI 1043 / ATCC BAA-672) (Erwinia carotovora subsp. atroseptica).